The following is a 131-amino-acid chain: MAAARKQNTRKRRVKKNIEAGIAHIRSTFNNTIVTITDVHGNAISWSSAGALGFRGSRKSTPFAAQMAAETAAKGSIEHGLKTLEVTVKGPGSGREAAIRALQAAGLEVTAIRDVTPVPHNGCRPPKRRRV.

Belongs to the universal ribosomal protein uS11 family. As to quaternary structure, part of the 30S ribosomal subunit. Interacts with proteins S7 and S18. Binds to IF-3.

Functionally, located on the platform of the 30S subunit, it bridges several disparate RNA helices of the 16S rRNA. Forms part of the Shine-Dalgarno cleft in the 70S ribosome. The protein is Small ribosomal subunit protein uS11 of Bacillus pumilus (strain SAFR-032).